An 86-amino-acid polypeptide reads, in one-letter code: uncharacterized protein (86 aa).

Residues 1 to 22 (MKTINTVVAAMALSTLSFGVFA) form the signal peptide.

It belongs to the BhsA/McbA family.

Its subcellular location is the periplasm. This is an uncharacterized protein from Escherichia coli O6:H1 (strain CFT073 / ATCC 700928 / UPEC).